A 101-amino-acid chain; its full sequence is AFA-III adhesin operon regulatory protein (101 aa).

Regulates the transcription of genes involved in the biosynthesis of afimbrial adhesin-III. This is AFA-III adhesin operon regulatory protein (afaA) from Escherichia coli.